A 542-amino-acid polypeptide reads, in one-letter code: Tripartite motif-containing protein 26 (542 aa).

The RING-type zinc-finger motif lies at 16–57 (CSICLDYLRDPVTIDCGHVFCRSCTSDIRPISGNRPVCPLCK). A B box-type zinc finger spans residues 97–138 (QDMKLCERHQEKLHYYCEDDGKLLCVMCRESREHRPHTAVLV). Residues cysteine 102, histidine 105, cysteine 124, and histidine 130 each contribute to the Zn(2+) site. Residues 197–243 (QFLKKREQHLLDQLATLEQLLTEGREKFKTRGVSELDRLTLVISELE) are a coiled coil. The B30.2/SPRY domain occupies 298-542 (RGLRQFQGKL…WPEARLLLRP (245 aa)). The disordered stretch occupies residues 379–440 (REGWSEDEEE…EEEEEVQESC (62 aa)). Composition is skewed to acidic residues over residues 383–405 (SEDE…EEPG) and 413–437 (WETD…EEVQ). A coiled-coil region spans residues 411 to 440 (EDWETDEEDESLGEEEEEEEEEEEEVQESC).

This sequence belongs to the TRIM/RBCC family. As to quaternary structure, interacts with TBK1; this interaction bridges together TBK1 and NEMO in order to activate TBK1. Interacts with INCA1. In terms of processing, autoubiquitinates upon viral infection. In turn, autoubiquitinated TRIM26 recruits NEMO and bridges TBK1-NEMO interaction.

Its subcellular location is the cytoplasm. It is found in the nucleus. The catalysed reaction is S-ubiquitinyl-[E2 ubiquitin-conjugating enzyme]-L-cysteine + [acceptor protein]-L-lysine = [E2 ubiquitin-conjugating enzyme]-L-cysteine + N(6)-ubiquitinyl-[acceptor protein]-L-lysine.. Its function is as follows. E3 ubiquitin-protein ligase which regulates the IFN-beta production and antiviral response downstream of various DNA-encoded pattern-recognition receptors (PRRs). Also plays a central role in determining the response to different forms of oxidative stress by controlling levels of DNA glycosylases NEIL1, NEIL3 and NTH1 that are involved in repair of damaged DNA. Promotes nuclear IRF3 ubiquitination and proteasomal degradation. Bridges together TBK1 and NEMO during the innate response to viral infection leading to the activation of TBK1. Positively regulates LPS-mediated inflammatory innate immune response by catalyzing the 'Lys-11'-linked polyubiquitination of TAB1 to enhance its activation and subsequent NF-kappa-B and MAPK signaling. In a manner independent of its catalytic activity, inhibits WWP2, a SOX2-directed E3 ubiquitin ligase, and thus protects SOX2 from polyubiquitination and proteasomal degradation. Ubiquitinates the histone acetyltransferase protein complex component PHF20 and thereby triggers its degradation in the nucleus after its recruitment by the histone demethylase KDM6B, serving as a scaffold protein. Upon induction by TGF-beta, ubiquitinates the TFIID component TAF7 for proteasomal degradation. Induces ferroptosis by ubiquitinating SLC7A11, a critical protein for lipid reactive oxygen species (ROS) scavenging. This Rattus norvegicus (Rat) protein is Tripartite motif-containing protein 26 (Trim26).